A 328-amino-acid polypeptide reads, in one-letter code: Ankyrin repeat domain-containing protein 2 (328 aa).

Residue Ser36 is modified to Phosphoserine. Ser68 bears the Phosphoserine; by PKB/AKT2 mark. A disordered region spans residues 96–116 (RDALAAAQEPPPEPEEITGPV). ANK repeat units follow at residues 116–145 (VNEETFLKAAVEGKMKVIDKYLADGGSADT), 149–178 (FRRTALHRASLEGHMEILEKLLENGATVDF), 182–211 (LDCTAMHWACRGGHLEVVRLLQSRGADTNV), 215–244 (LLSTPLHVAVRTGHVEIVEHFLSLGLDINA), and 248–277 (EGDSALHDAVRLNRYKIIKLLLLHGADMMA). A disordered region spans residues 297-328 (RHALEHPEPESEQNGLERPGSGRETPQPIPAQ).

As to quaternary structure, interacts with ID3; both proteins cooperate in myoblast differentiation. Interacts with TTN/titin. Interacts (via ANK repeats) with TCAP; the interaction is direct. Interacts with TJP1 (via PDZ domains). Interacts with PML; the interaction is direct. Interacts with p53/TP53. Interacts with YBX1. Interacts with AKT2. Post-translationally, phosphorylation at Ser-68 by PKB/AKT2 in response to oxidative stress induces translocation to the nucleus and negatively regulates myoblast differentiation. Expressed by myoblasts (at protein level). Expressed in skeletal and cardiac muscles.

The protein resides in the cytoplasm. It localises to the myofibril. Its subcellular location is the sarcomere. It is found in the i band. The protein localises to the cytosol. The protein resides in the nucleus. It localises to the PML body. Functions as a negative regulator of myocyte differentiation. May interact with both sarcoplasmic structural proteins and nuclear proteins to regulate gene expression during muscle development and in response to muscle stress. The chain is Ankyrin repeat domain-containing protein 2 (Ankrd2) from Mus musculus (Mouse).